Consider the following 318-residue polypeptide: uncharacterized protein (318 aa).

Positions 67-157 form a coiled coil; the sequence is LAFDELEKEK…SLKAIQTSQE (91 aa). Residues 172 to 318 are disordered; it reads ESTNKVEKNA…KGFFARLFNL (147 aa). 2 stretches are compositionally biased toward basic and acidic residues: residues 175–193 and 219–236; these read NKVE…KDSK and KVDK…EKAS. The span at 237–248 shows a compositional bias: polar residues; it reads VEQSKNGNAAET. Basic and acidic residues-rich tracts occupy residues 249 to 274 and 300 to 310; these read SNKE…HAEA and SEPKPQEEKKG.

This is an uncharacterized protein from Staphylococcus aureus (strain MW2).